Here is a 501-residue protein sequence, read N- to C-terminus: Glucans biosynthesis protein G (501 aa).

An N-terminal signal peptide occupies residues 1–24 (MNRRQVLAALAAIPLLPEAFPANA).

Belongs to the OpgD/OpgG family.

The protein resides in the periplasm. The protein operates within glycan metabolism; osmoregulated periplasmic glucan (OPG) biosynthesis. Its function is as follows. Involved in the biosynthesis of osmoregulated periplasmic glucans (OPGs). This is Glucans biosynthesis protein G from Rhodopseudomonas palustris (strain BisA53).